Consider the following 486-residue polypeptide: Na(+)/H(+) antiporter NhaA 2 (486 aa).

Transmembrane regions (helical) follow at residues 58 to 78 (GGLLLLAATVAALVWANTAPG), 102 to 122 (LTDWVADALLAVFFFTVGLEL), 138 to 158 (ALPVAAAAGGMLAPALLCLAL), 168 to 188 (AWAIPVATDIAFALGVLSLAG), 198 to 218 (VLLGLAVADDLGGILLIALGL), 220 to 240 (HGINPAWLATATTLLATTALA), 260 to 280 (ISLHAAGIHPTVAGVALGLLV), 300 to 320 (LGPINAAVILPAFALSATGVS), 338 to 358 (VAVGLLAGKLLGVPAGAWLAV), 374 to 394 (LVPLGLLAGIGYTVSLLITRL), and 404 to 424 (GASTAILTASVAASALALTAL). The interval 432 to 486 (GAPATRGSSRPATQVGGVAGPIPQTRRESDGGPTGGQEPPPARVRRAPPASPHPR) is disordered.

Belongs to the NhaA Na(+)/H(+) (TC 2.A.33) antiporter family.

The protein localises to the cell membrane. It carries out the reaction Na(+)(in) + 2 H(+)(out) = Na(+)(out) + 2 H(+)(in). In terms of biological role, na(+)/H(+) antiporter that extrudes sodium in exchange for external protons. The polypeptide is Na(+)/H(+) antiporter NhaA 2 (Frankia alni (strain DSM 45986 / CECT 9034 / ACN14a)).